The chain runs to 257 residues: Sad1-interacting factor 1 (257 aa).

The disordered stretch occupies residues 16–68 (LNKIKQGGASRINQILGQNSDDSQSDVRATASEEAVHSETATPVTPMSSGFME). Composition is skewed to polar residues over residues 26-37 (RINQILGQNSDD) and 54-63 (ETATPVTPMS). At Ser-35 the chain carries Phosphoserine. Position 132 is a phosphoserine (Ser-132). At Thr-134 the chain carries Phosphothreonine. The next 2 helical transmembrane spans lie at 160–180 (LLAISIVVIVCYFKHLPLLPW) and 231–251 (FTQLITDACMTIFALGLCCYF).

As to quaternary structure, interacts with kms1 and sad1.

It localises to the membrane. The polypeptide is Sad1-interacting factor 1 (sif1) (Schizosaccharomyces pombe (strain 972 / ATCC 24843) (Fission yeast)).